We begin with the raw amino-acid sequence, 235 residues long: Putative homeobox-leucine zipper protein ATHB-51 (235 aa).

The segment at residues 74–133 (EMIKKKRLTSGQLASLERSFQEEIKLDSDRKVKLSRELGLQPRQIAVWFQNRRARWKAKQ) is a DNA-binding region (homeobox). Positions 134 to 162 (LEQLYDSLRQEYDVVSREKQMLHDEVKKL) are leucine-zipper.

It belongs to the HD-ZIP homeobox family. Class I subfamily. In terms of tissue distribution, widely expressed.

It localises to the nucleus. In terms of biological role, putative transcription factor. The sequence is that of Putative homeobox-leucine zipper protein ATHB-51 (ATHB-51) from Arabidopsis thaliana (Mouse-ear cress).